Consider the following 400-residue polypeptide: Centrosomal protein CEP57L1 (400 aa).

Serine 45 is subject to Phosphoserine. 2 coiled-coil regions span residues 47–111 (NNQA…KKDI) and 138–213 (NVER…QDRA). Disordered regions lie at residues 222-261 (REPP…EPVS) and 314-400 (MESK…KWEQ). The span at 244–258 (RTTSQARANPQSSGE) shows a compositional bias: polar residues. Residues 261 to 345 (SICDSLSELL…EKIENSRINE (85 aa)) are a coiled coil. Basic and acidic residues-rich tracts occupy residues 314-342 (MESK…ENSR) and 391-400 (LRRDDIKWEQ).

It belongs to the translokin family.

The protein localises to the cytoplasm. Its subcellular location is the cytoskeleton. The protein resides in the microtubule organizing center. It localises to the centrosome. Its function is as follows. Centrosomal protein which may be required for microtubule attachment to centrosomes. The sequence is that of Centrosomal protein CEP57L1 (Cep57l1) from Mus musculus (Mouse).